A 225-amino-acid polypeptide reads, in one-letter code: Probable methylthioribulose-1-phosphate dehydratase (225 aa).

A substrate-binding site is contributed by C86. Residues H104 and H106 each coordinate Zn(2+). E127 serves as the catalytic Proton donor/acceptor. H183 is a Zn(2+) binding site.

It belongs to the aldolase class II family. MtnB subfamily. Requires Zn(2+) as cofactor.

The protein resides in the cytoplasm. It catalyses the reaction 5-(methylsulfanyl)-D-ribulose 1-phosphate = 5-methylsulfanyl-2,3-dioxopentyl phosphate + H2O. It participates in amino-acid biosynthesis; L-methionine biosynthesis via salvage pathway; L-methionine from S-methyl-5-thio-alpha-D-ribose 1-phosphate: step 2/6. In terms of biological role, catalyzes the dehydration of methylthioribulose-1-phosphate (MTRu-1-P) into 2,3-diketo-5-methylthiopentyl-1-phosphate (DK-MTP-1-P). The polypeptide is Probable methylthioribulose-1-phosphate dehydratase (Leishmania infantum).